An 830-amino-acid chain; its full sequence is G-type lectin S-receptor-like serine/threonine-protein kinase SD1-13 (830 aa).

The first 21 residues, 1–21 (MGCLLILLLTLICFSLRLCLA), serve as a signal peptide directing secretion. Residues 22–145 (TDVITFSSEF…TNTGDEILWE (124 aa)) enclose the Bulb-type lectin domain. At 22–434 (TDVITFSSEF…SEFKKRTNRS (413 aa)) the chain is on the extracellular side. N-linked (GlcNAc...) asparagine glycosylation is found at N40, N53, and N82. The EGF-like; atypical domain maps to 283–321 (PSTKCDTYATCGQFASCRFNPGSTPPCMCIRGFKPQSYA). Intrachain disulfides connect C287–C299 and C293–C309. 3 N-linked (GlcNAc...) asparagine glycosylation sites follow: N327, N384, and N432. The PAN domain maps to 340–423 (CESRDNNDGS…TGVVFYIRLA (84 aa)). Intrachain disulfides connect C377/C398 and C381/C387. Residues 435-455 (IVITVTLLVGAFLFAGTVVLA) traverse the membrane as a helical segment. At 456–830 (LWKIAKHREK…NVSLTKITGR (375 aa)) the chain is on the cytoplasmic side. The region spanning 512 to 798 (FSITNKLGQG…NLPEPKQPAF (287 aa)) is the Protein kinase domain. ATP is bound by residues 518 to 526 (LGQGGFGAV) and K540. Position 545 is a phosphothreonine (T545). S546 and S561 each carry phosphoserine. A caM-binding region spans residues 601-618 (VKQRLLDWKTRFNIIDGI). Residue D637 is the Proton acceptor of the active site. Phosphoserine occurs at positions 641, 654, and 670. T671 carries the phosphothreonine modification. 9 positions are modified to phosphoserine: S714, S715, S726, S805, S809, S810, S813, S818, and S823. Residues 789-830 (NLPEPKQPAFIPRRGTSEVESSGQSDPRASINNVSLTKITGR) form a disordered region. Residues 806–830 (EVESSGQSDPRASINNVSLTKITGR) are compositionally biased toward polar residues. T825 and T828 each carry phosphothreonine.

This sequence belongs to the protein kinase superfamily. Ser/Thr protein kinase family. As to quaternary structure, interacts with PUB9, PUB13 and PUB14. Binds to calmodulin (CaM) in a Ca(2+)-dependent manner. In terms of processing, autophosphorylated. Mostly expressed in rosette leaves, and, to a lower extent, in cauline leaves and stems.

It is found in the cell membrane. The catalysed reaction is L-seryl-[protein] + ATP = O-phospho-L-seryl-[protein] + ADP + H(+). The enzyme catalyses L-threonyl-[protein] + ATP = O-phospho-L-threonyl-[protein] + ADP + H(+). Functionally, receptor-like serine/threonine-protein kinase that represses the disease resistance signaling pathway triggered in response to bacterial pathogen such as Pseudomonas syringae pv. tomato. The protein is G-type lectin S-receptor-like serine/threonine-protein kinase SD1-13 (SD113) of Arabidopsis thaliana (Mouse-ear cress).